The sequence spans 791 residues: Phenylalanine--tRNA ligase beta subunit (791 aa).

Residues 39–147 form the tRNA-binding domain; it reads GDALGQVVVA…DDAPVGQALA (109 aa). The B5 domain maps to 400–475; sequence PQPASILLRR…RIHGYDRVPT (76 aa). Positions 453, 459, 462, and 463 each coordinate Mg(2+). The FDX-ACB domain occupies 697 to 790; the sequence is SRYPSMRRDL…IEREHRARIR (94 aa).

This sequence belongs to the phenylalanyl-tRNA synthetase beta subunit family. Type 1 subfamily. As to quaternary structure, tetramer of two alpha and two beta subunits. Requires Mg(2+) as cofactor.

The protein resides in the cytoplasm. It catalyses the reaction tRNA(Phe) + L-phenylalanine + ATP = L-phenylalanyl-tRNA(Phe) + AMP + diphosphate + H(+). The polypeptide is Phenylalanine--tRNA ligase beta subunit (Xanthomonas campestris pv. campestris (strain 8004)).